The chain runs to 175 residues: Co-chaperone protein daf-41 (175 aa).

Residues 2–89 form the CS domain; sequence AKQPTVLWAQ…KTPAWWPRLL (88 aa). The disordered stretch occupies residues 109–175; that stretch reads DEDDEAEDAG…EEEGKNGTRA (67 aa). The span at 148–168 shows a compositional bias: acidic residues; the sequence is GLEDDEEDDDMPDLEDNEEEE.

Belongs to the p23/wos2 family. As to expression, expressed in anterior and posterior neurons including ASE, AWC, ASI and ADL amphids and phasmid sensory neurons, peripheral neurons and ventral cord motorneurons. Additionally expressed in body wall muscle, pharynx, vulva, germ cells and intestine.

Functionally, co-chaperone for hsp90/daf-21. Involved in regulation of longevity, larval entry and exit from the dauer stage of development and response to environmental cues, such as oxidative stress, in a temperature-dependent manner. Role in daf-16 and hsf-1 inhibition at elevated temperatures. The sequence is that of Co-chaperone protein daf-41 from Caenorhabditis elegans.